A 423-amino-acid chain; its full sequence is E3 ubiquitin-protein ligase makorin-2 (423 aa).

2 C3H1-type zinc fingers span residues 2-29 (STKQ…HDLN) and 31-58 (SKPS…HIKP). The disordered stretch occupies residues 59–90 (SSRGGGGGAPEDQAGGGGAGGGGAGIGGAGGG). Gly residues predominate over residues 61 to 90 (RGGGGGAPEDQAGGGGAGGGGAGIGGAGGG). Residues 162-189 (QNLPQLCPYAANGHCFYEENCTYLHGDL) form a C3H1-type 3 zinc finger. Residues 190-219 (CEVCGLQVLHPHDSEQRRAHEKMCLAAFEA) are makorin-type Cys-His. Residues 235-289 (CSICMEVVVQKANPSDRRFGILSSCCHTFCLACIRKWRCTRTFSNTIIKSCPECR) form an RING-type zinc finger. The C3H1-type 4 zinc-finger motif lies at 318 to 347 (GVSKKACKYFDQGRGSCPFGGKCLYLHAFP).

Its subcellular location is the cytoplasm. It localises to the nucleus. The enzyme catalyses S-ubiquitinyl-[E2 ubiquitin-conjugating enzyme]-L-cysteine + [acceptor protein]-L-lysine = [E2 ubiquitin-conjugating enzyme]-L-cysteine + N(6)-ubiquitinyl-[acceptor protein]-L-lysine.. It functions in the pathway protein modification; protein ubiquitination. In terms of biological role, E3 ubiquitin ligase catalyzing the covalent attachment of ubiquitin moieties onto substrate proteins. Inhibits neurogenesis and axis formation during embryonic development by modulating the phosphatidylinositol 3-kinase (PI3K) pathway. Acts downstream of PI3K and akt1 to up-regulate gsk3b mRNA expression. The polypeptide is E3 ubiquitin-protein ligase makorin-2 (mkrn2) (Seriola quinqueradiata (Five-ray yellowtail)).